The chain runs to 264 residues: Thymidylate synthase (264 aa).

Arg21 contacts dUMP. His51 contributes to the (6R)-5,10-methylene-5,6,7,8-tetrahydrofolate binding site. Residue 126–127 (RR) coordinates dUMP. Catalysis depends on Cys146, which acts as the Nucleophile. Residues 166-169 (RSAD), Asn177, and 207-209 (HIY) contribute to the dUMP site. Asp169 contributes to the (6R)-5,10-methylene-5,6,7,8-tetrahydrofolate binding site. Position 263 (Ala263) interacts with (6R)-5,10-methylene-5,6,7,8-tetrahydrofolate.

This sequence belongs to the thymidylate synthase family. Bacterial-type ThyA subfamily. In terms of assembly, homodimer.

It localises to the cytoplasm. The enzyme catalyses dUMP + (6R)-5,10-methylene-5,6,7,8-tetrahydrofolate = 7,8-dihydrofolate + dTMP. Its pathway is pyrimidine metabolism; dTTP biosynthesis. In terms of biological role, catalyzes the reductive methylation of 2'-deoxyuridine-5'-monophosphate (dUMP) to 2'-deoxythymidine-5'-monophosphate (dTMP) while utilizing 5,10-methylenetetrahydrofolate (mTHF) as the methyl donor and reductant in the reaction, yielding dihydrofolate (DHF) as a by-product. This enzymatic reaction provides an intracellular de novo source of dTMP, an essential precursor for DNA biosynthesis. This is Thymidylate synthase from Brucella abortus (strain 2308).